A 173-amino-acid chain; its full sequence is Large ribosomal subunit protein uL16 (173 aa).

It belongs to the universal ribosomal protein uL16 family.

This chain is Large ribosomal subunit protein uL16, found in Methanococcus aeolicus (strain ATCC BAA-1280 / DSM 17508 / OCM 812 / Nankai-3).